Here is a 208-residue protein sequence, read N- to C-terminus: Protein-L-isoaspartate O-methyltransferase (208 aa).

Serine 59 is a catalytic residue.

Belongs to the methyltransferase superfamily. L-isoaspartyl/D-aspartyl protein methyltransferase family.

It is found in the cytoplasm. The catalysed reaction is [protein]-L-isoaspartate + S-adenosyl-L-methionine = [protein]-L-isoaspartate alpha-methyl ester + S-adenosyl-L-homocysteine. Functionally, catalyzes the methyl esterification of L-isoaspartyl residues in peptides and proteins that result from spontaneous decomposition of normal L-aspartyl and L-asparaginyl residues. It plays a role in the repair and/or degradation of damaged proteins. This chain is Protein-L-isoaspartate O-methyltransferase, found in Escherichia fergusonii (strain ATCC 35469 / DSM 13698 / CCUG 18766 / IAM 14443 / JCM 21226 / LMG 7866 / NBRC 102419 / NCTC 12128 / CDC 0568-73).